The sequence spans 122 residues: Large ribosomal subunit protein uL14 (122 aa).

This sequence belongs to the universal ribosomal protein uL14 family. As to quaternary structure, part of the 50S ribosomal subunit. Forms a cluster with proteins L3 and L19. In the 70S ribosome, L14 and L19 interact and together make contacts with the 16S rRNA in bridges B5 and B8.

Its function is as follows. Binds to 23S rRNA. Forms part of two intersubunit bridges in the 70S ribosome. In Shewanella denitrificans (strain OS217 / ATCC BAA-1090 / DSM 15013), this protein is Large ribosomal subunit protein uL14.